The primary structure comprises 90 residues: MDPLRAQQLAAELEVEMMADMYNRMTSACHRKCVPPHYKEAELSKGESVCLDRCVSKYLDIHERMGKKLTELSMQDEELMKRVQQSSGPA.

A Twin CX3C motif motif is present at residues 29 to 54; it reads CHRKCVPPHYKEAELSKGESVCLDRC. Intrachain disulfides connect cysteine 29/cysteine 54 and cysteine 33/cysteine 50.

The protein belongs to the small Tim family. In terms of assembly, heterohexamer; composed of 3 copies of TIMM9 and 3 copies of TIMM10/TIM10A, named soluble 70 kDa complex. The complex forms a 6-bladed alpha-propeller structure and associates with the TIMM22 component of the TIM22 complex. Interacts with multi-pass transmembrane proteins in transit. Also forms a complex composed of TIMM9, TIMM10/TIM10A and FXC1/TIM10B.

It localises to the mitochondrion inner membrane. Functionally, mitochondrial intermembrane chaperone that participates in the import and insertion of multi-pass transmembrane proteins into the mitochondrial inner membrane. May also be required for the transfer of beta-barrel precursors from the TOM complex to the sorting and assembly machinery (SAM complex) of the outer membrane. Acts as a chaperone-like protein that protects the hydrophobic precursors from aggregation and guide them through the mitochondrial intermembrane space. The sequence is that of Mitochondrial import inner membrane translocase subunit Tim10 (Timm10) from Rattus norvegicus (Rat).